The following is a 457-amino-acid chain: tRNA modification GTPase MnmE (457 aa).

(6S)-5-formyl-5,6,7,8-tetrahydrofolate-binding residues include arginine 22, glutamate 83, and arginine 122. Positions 219–378 (GLATAIIGRP…LEEAIKTLFF (160 aa)) constitute a TrmE-type G domain. Asparagine 229 serves as a coordination point for K(+). Residues 229–234 (NVGKSS), 248–254 (TDIAGTT), and 273–276 (DTAG) contribute to the GTP site. Serine 233 contacts Mg(2+). Residues threonine 248, isoleucine 250, and threonine 253 each coordinate K(+). Threonine 254 is a binding site for Mg(2+). Lysine 457 lines the (6S)-5-formyl-5,6,7,8-tetrahydrofolate pocket.

Belongs to the TRAFAC class TrmE-Era-EngA-EngB-Septin-like GTPase superfamily. TrmE GTPase family. As to quaternary structure, homodimer. Heterotetramer of two MnmE and two MnmG subunits. It depends on K(+) as a cofactor.

The protein localises to the cytoplasm. In terms of biological role, exhibits a very high intrinsic GTPase hydrolysis rate. Involved in the addition of a carboxymethylaminomethyl (cmnm) group at the wobble position (U34) of certain tRNAs, forming tRNA-cmnm(5)s(2)U34. In Listeria welshimeri serovar 6b (strain ATCC 35897 / DSM 20650 / CCUG 15529 / CIP 8149 / NCTC 11857 / SLCC 5334 / V8), this protein is tRNA modification GTPase MnmE.